The following is a 746-amino-acid chain: Hyperosmolality-gated Ca2+ permeable channel 2.1 (746 aa).

10 helical membrane-spanning segments follow: residues 3–23 (ISALLTSAGINISICIVLLSL), 90–110 (MVIFSIRIFFIVAVICIAFVL), 144–164 (LWVHCLALYIITSAACLLLYF), 357–377 (IATLVGAVAFMFVFLIPVTFI), 405–425 (VITGYLPSVILILFFYAVPPL), 445–465 (ACIKVLYFTIWNVFFVNILSG), 492–512 (AGFFMTYCFTSGWASLACEIM), 560–580 (VIAPLILPFLLIYFFLAYLIY), 601–621 (IFHNTTIFSLILTQIIALGFF), and 623–643 (LKLSTVASGFTIPLILLTLLF). Polar residues predominate over residues 692-702 (LHSQKSSSKAE). The tract at residues 692 to 723 (LHSQKSSSKAECSNPFKKQELPDPEKLKPEEG) is disordered. Basic and acidic residues predominate over residues 708-723 (KKQELPDPEKLKPEEG).

The protein belongs to the CSC1 (TC 1.A.17) family.

Its subcellular location is the membrane. Functionally, acts as an osmosensitive calcium-permeable cation channel. This is Hyperosmolality-gated Ca2+ permeable channel 2.1 from Arabidopsis thaliana (Mouse-ear cress).